Reading from the N-terminus, the 121-residue chain is Large ribosomal subunit protein bL12 (121 aa).

It belongs to the bacterial ribosomal protein bL12 family. Homodimer. Part of the ribosomal stalk of the 50S ribosomal subunit. Forms a multimeric L10(L12)X complex, where L10 forms an elongated spine to which 2 to 4 L12 dimers bind in a sequential fashion. Binds GTP-bound translation factors.

Forms part of the ribosomal stalk which helps the ribosome interact with GTP-bound translation factors. Is thus essential for accurate translation. In Pseudomonas syringae pv. tomato (strain ATCC BAA-871 / DC3000), this protein is Large ribosomal subunit protein bL12.